We begin with the raw amino-acid sequence, 627 residues long: MACPF domain-containing protein At1g14780 (627 aa).

In terms of domain architecture, MACPF spans Met-1–Leu-339.

Belongs to the complement C6/C7/C8/C9 (TC 1.C.39) family.

Functionally, negatively controls the salicylic acid (SA)-mediated pathway of programmed cell death in plant immunity. In Arabidopsis thaliana (Mouse-ear cress), this protein is MACPF domain-containing protein At1g14780.